A 261-amino-acid chain; its full sequence is Phosphonates import ATP-binding protein PhnC (261 aa).

The ABC transporter domain occupies 9–253 (IQLKDVSKIY…VFDDIYNGGN (245 aa)). 42–49 (GLSGAGKS) is a binding site for ATP.

The protein belongs to the ABC transporter superfamily. Phosphonates importer (TC 3.A.1.9.1) family. As to quaternary structure, the complex is composed of two ATP-binding proteins (PhnC), two transmembrane proteins (PhnE) and a solute-binding protein (PhnD).

The protein localises to the cell membrane. The enzyme catalyses phosphonate(out) + ATP + H2O = phosphonate(in) + ADP + phosphate + H(+). In terms of biological role, part of the ABC transporter complex PhnCDE involved in phosphonates import. Responsible for energy coupling to the transport system. The sequence is that of Phosphonates import ATP-binding protein PhnC from Lactobacillus gasseri (strain ATCC 33323 / DSM 20243 / BCRC 14619 / CIP 102991 / JCM 1131 / KCTC 3163 / NCIMB 11718 / NCTC 13722 / AM63).